A 237-amino-acid chain; its full sequence is Uridylate kinase (237 aa).

Position 9-12 (9-12) interacts with ATP; the sequence is KLSG. Residue G51 participates in UMP binding. The ATP site is built by G52 and R56. UMP is bound by residues D71 and 132-139; that span reads CGNPFFTT. Positions 159, 165, and 168 each coordinate ATP.

This sequence belongs to the UMP kinase family. As to quaternary structure, homohexamer.

It localises to the cytoplasm. It catalyses the reaction UMP + ATP = UDP + ADP. Its pathway is pyrimidine metabolism; CTP biosynthesis via de novo pathway; UDP from UMP (UMPK route): step 1/1. With respect to regulation, inhibited by UTP. In terms of biological role, catalyzes the reversible phosphorylation of UMP to UDP. This is Uridylate kinase from Prochlorococcus marinus (strain MIT 9313).